The chain runs to 455 residues: MPPLLTNRQAEELHKSMIAYLVASDLPDTAAALRREVNLSEDVFDPTTAKRYEGMLEKKWTSIARLQKKIMDLESRNATLQSELDNSTPASRLKRNQDPASWLPSTVRYSLESHRDKVNCVAFHPTFSSIASGSDDCTIKIWDWELGELERTLKGHTRAVRDVDYGGPRDNVLLASCSSDLSIKLWKPTDNYKNIRTLQGHDHIVSAVRFIPSRNLLVSASRDNDMRIWDVTTGYCVKTINGHTDWVRDVSISFDGRFLFSTGQDMTARLWDISTVSNIEHKRTMLGHENFIECCAFAPPTSYQFLAPLAGLGKRPSSTNGADFMATGSRDNTIKIWDSRGTCLMTLVGHDSWVQALVFHPGGKYLLSVSDDKTLRCWDLNQQGKCVKTLDAHESFVTSLRWAPGVAKNVPGGDGAAEGEGNDKNGAGSENPANIQMRCVVATGGWDQKLKIFAG.

A LisH domain is found at 9–41; sequence QAEELHKSMIAYLVASDLPDTAAALRREVNLSE. A coiled-coil region spans residues 61 to 88; sequence TSIARLQKKIMDLESRNATLQSELDNST. WD repeat units lie at residues 113–154, 156–196, 200–239, 242–281, 287–347, 349–388, 392–438, and 440–455; these read SHRD…RTLK, HTRA…KNIR, GHDHIVSAVRFIPSRNLLVSASRDNDMRIWDVTTGYCVKT, GHTDWVRDVSISFDGRFLFSTGQDMTARLWDISTVSNIEH, GHEN…LMTL, GHDSWVQALVFHPGGKYLLSVSDDKTLRCWDLNQQGKCVK, AHES…IQMR, and VVATGGWDQKLKIFAG. Residues 408–431 are disordered; sequence KNVPGGDGAAEGEGNDKNGAGSEN.

It belongs to the WD repeat LIS1/nudF family. Self-associates. Interacts with nudE and dynein.

It localises to the cytoplasm. It is found in the cytoskeleton. The protein resides in the spindle pole. In terms of biological role, positively regulates the activity of the minus-end directed microtubule motor protein dynein. May enhance dynein-mediated microtubule sliding by targeting dynein to the microtubule plus end. Required for nuclear migration during vegetative growth as well as development. Required for retrograde early endosome (EE) transport from the hyphal tip. Required for localization of dynein to the mitotic spindle poles. Recruits additional proteins to the dynein complex at SPBs. In Aspergillus flavus (strain ATCC 200026 / FGSC A1120 / IAM 13836 / NRRL 3357 / JCM 12722 / SRRC 167), this protein is Nuclear distribution protein nudF.